A 123-amino-acid polypeptide reads, in one-letter code: Large ribosomal subunit protein bL20 (123 aa).

This sequence belongs to the bacterial ribosomal protein bL20 family.

In terms of biological role, binds directly to 23S ribosomal RNA and is necessary for the in vitro assembly process of the 50S ribosomal subunit. It is not involved in the protein synthesizing functions of that subunit. This Chlamydia trachomatis serovar L2b (strain UCH-1/proctitis) protein is Large ribosomal subunit protein bL20.